We begin with the raw amino-acid sequence, 921 residues long: MEYKNTLLMPKTEFPMRGNLPKREPAIQEKWAEMNIYEKVQERTKGRPLFVLHDGPPYANGDIHMGHALNKVLKDFIVRYKSMTGYCAPYVPGWDTHGLPIEQALTNKGVKRKEMPVAEFRKLCAEYAYEQVNRQREQFKRLGVRADWDHPYITLEPAYEAQQIKVFGEMAKKGYIYKGQKPVYWSPTSESALAEAEIEYKDKKSASIYVAFEVKDGKDVLEGDEKFIIWTTTPWTLPANLGISVHPKLEYSIVKVNDEKYIIASDLFDTVAKTLEWENPEVVRTVKGSELEYTVAKHPFYDRDSLVMLGEHVTTDAGTGCVHTAPGHGEDDFIVGQKYGLEVLCPVDDKGVLTSEAPGFEGLFYDKANKPITEKLEEVGALLKLTFITHSYPHDWRTKKPIIFRATAQWFASIEAFRSELLQAVKETKWVPAWGETRLHNMVRDRGDWCISRQRAWGVPIPVFYAENNDPIITDETINHVANLFREHGSNVWFEREAKDLLPEGFTHPSSPNGEFRKETDIMDVWFDSGSSHQAVLEERDDLQRPADLYLEGSDQYRGWFNSSLSTAVAVTGKAPYKGVLSHGFVLDGEGRKMSKSIGNIVVPKKIMDQLGGDILRLWVSSVDYQSDVRISDDILKQVAEVYRKIRNTFRFLLGNLADFNPAQDAVAKAELREVDRYMLVKLNDLITKVKEAYETYDFAAVYHAIHNFCTIDLSSFYLDFAKDILYIEAANHHDRRAIQTVLYDVLVALTKLVTPILPHTADEVWPYIPGVTEESVQLTDMPEAIELQDGEALKTKWDAFMTLRSDVLKALEVARNEKVIGKSLTASITLFPTAEMKEMLESIQEDLKQLFIVSEYKLGGTIEEAPADAQKYEHTAVLVTQANGETCERCWVVSETVGNDNEYKTLCERCATVVKENYVK.

A 'HIGH' region motif is present at residues Pro-57 to His-67. Glu-552 is a binding site for L-isoleucyl-5'-AMP. The short motif at Lys-593–Ser-597 is the 'KMSKS' region element. Lys-596 contributes to the ATP binding site. Zn(2+) is bound by residues Cys-888, Cys-891, Cys-908, and Cys-911.

The protein belongs to the class-I aminoacyl-tRNA synthetase family. IleS type 1 subfamily. In terms of assembly, monomer. Requires Zn(2+) as cofactor.

It is found in the cytoplasm. It carries out the reaction tRNA(Ile) + L-isoleucine + ATP = L-isoleucyl-tRNA(Ile) + AMP + diphosphate. Catalyzes the attachment of isoleucine to tRNA(Ile). As IleRS can inadvertently accommodate and process structurally similar amino acids such as valine, to avoid such errors it has two additional distinct tRNA(Ile)-dependent editing activities. One activity is designated as 'pretransfer' editing and involves the hydrolysis of activated Val-AMP. The other activity is designated 'posttransfer' editing and involves deacylation of mischarged Val-tRNA(Ile). The sequence is that of Isoleucine--tRNA ligase from Bacillus cytotoxicus (strain DSM 22905 / CIP 110041 / 391-98 / NVH 391-98).